The primary structure comprises 94 residues: Small ribosomal subunit protein bS6 (94 aa).

It belongs to the bacterial ribosomal protein bS6 family.

Binds together with bS18 to 16S ribosomal RNA. In Clostridium botulinum (strain Kyoto / Type A2), this protein is Small ribosomal subunit protein bS6.